Reading from the N-terminus, the 229-residue chain is Large ribosomal subunit protein uL1 (229 aa).

It belongs to the universal ribosomal protein uL1 family. Part of the 50S ribosomal subunit.

Binds directly to 23S rRNA. The L1 stalk is quite mobile in the ribosome, and is involved in E site tRNA release. In terms of biological role, protein L1 is also a translational repressor protein, it controls the translation of the L11 operon by binding to its mRNA. The polypeptide is Large ribosomal subunit protein uL1 (Histophilus somni (strain 129Pt) (Haemophilus somnus)).